Here is a 424-residue protein sequence, read N- to C-terminus: CinA-like protein (424 aa).

This sequence belongs to the CinA family.

The chain is CinA-like protein from Shewanella pealeana (strain ATCC 700345 / ANG-SQ1).